A 377-amino-acid polypeptide reads, in one-letter code: tRNA-specific 2-thiouridylase MnmA (377 aa).

ATP contacts are provided by residues 22-29 (GMSGGVDS) and Met48. An interaction with target base in tRNA region spans residues 108–110 (NPD). The Nucleophile role is filled by Cys113. Cys113 and Cys210 are oxidised to a cystine. Residue Gly138 participates in ATP binding. The tract at residues 160 to 162 (KDQ) is interaction with tRNA. The active-site Cysteine persulfide intermediate is Cys210. Positions 322–323 (RY) are interaction with tRNA.

The protein belongs to the MnmA/TRMU family.

It is found in the cytoplasm. The enzyme catalyses S-sulfanyl-L-cysteinyl-[protein] + uridine(34) in tRNA + AH2 + ATP = 2-thiouridine(34) in tRNA + L-cysteinyl-[protein] + A + AMP + diphosphate + H(+). Its function is as follows. Catalyzes the 2-thiolation of uridine at the wobble position (U34) of tRNA, leading to the formation of s(2)U34. This is tRNA-specific 2-thiouridylase MnmA from Shewanella amazonensis (strain ATCC BAA-1098 / SB2B).